Reading from the N-terminus, the 198-residue chain is Nucleoid occlusion factor SlmA (198 aa).

In terms of domain architecture, HTH tetR-type spans 9–70 (RNRREEILQA…SLIEFIEDTL (62 aa)). A DNA-binding region (H-T-H motif) is located at residues 33-52 (TTAKLAANVGVSEAALYRHF). The stretch at 117 to 144 (EQDRLQGRINQLFERIEAQLRQVLKERR) forms a coiled coil.

Belongs to the nucleoid occlusion factor SlmA family. Homodimer. Interacts with FtsZ.

The protein localises to the cytoplasm. It localises to the nucleoid. Functionally, required for nucleoid occlusion (NO) phenomenon, which prevents Z-ring formation and cell division over the nucleoid. Acts as a DNA-associated cell division inhibitor that binds simultaneously chromosomal DNA and FtsZ, and disrupts the assembly of FtsZ polymers. SlmA-DNA-binding sequences (SBS) are dispersed on non-Ter regions of the chromosome, preventing FtsZ polymerization at these regions. This is Nucleoid occlusion factor SlmA from Edwardsiella ictaluri (strain 93-146).